A 97-amino-acid polypeptide reads, in one-letter code: MLKMNLANLQLFAHKKGGGSTSNGRDSQAKRLGAKAADGQTVTGGSILYRQRGTHIHAGVNVGRGGDDTLFAKVEGVVRFERKGRDKKQVSVYPIAK.

A disordered region spans residues 14–36 (HKKGGGSTSNGRDSQAKRLGAKA).

The protein belongs to the bacterial ribosomal protein bL27 family.

The polypeptide is Large ribosomal subunit protein bL27 (Streptococcus sanguinis (strain SK36)).